Reading from the N-terminus, the 252-residue chain is Small ribosomal subunit protein uS3 (252 aa).

The 70-residue stretch at 16–85 (IDEYLETKLE…NPQVEVKEVD (70 aa)) folds into the KH type-2 domain. The disordered stretch occupies residues 233–252 (EESEIEEITEEIEDVETLEE).

The protein belongs to the universal ribosomal protein uS3 family. Part of the 30S ribosomal subunit.

In terms of biological role, binds the lower part of the 30S subunit head. The sequence is that of Small ribosomal subunit protein uS3 from Methanosphaera stadtmanae (strain ATCC 43021 / DSM 3091 / JCM 11832 / MCB-3).